A 59-amino-acid chain; its full sequence is MAVPKKRTSKAKKNARKANWKNQAKTEAQKALSLAKSVLTGKSNGFVYNTLEVADAIVE.

Residues 1-19 (MAVPKKRTSKAKKNARKAN) are compositionally biased toward basic residues. Residues 1-24 (MAVPKKRTSKAKKNARKANWKNQA) form a disordered region.

The protein belongs to the bacterial ribosomal protein bL32 family.

The protein localises to the plastid. The protein resides in the chloroplast. The protein is Large ribosomal subunit protein bL32c (rpl32) of Porphyra purpurea (Red seaweed).